The primary structure comprises 195 residues: Small ribosomal subunit protein uS4c (195 aa).

The S4 RNA-binding domain maps to 82-143; the sequence is MRLDNILFRL…KQRSKALIQN (62 aa).

This sequence belongs to the universal ribosomal protein uS4 family. In terms of assembly, part of the 30S ribosomal subunit. Contacts protein S5. The interaction surface between S4 and S5 is involved in control of translational fidelity.

The protein resides in the plastid. It localises to the chloroplast. Its function is as follows. One of the primary rRNA binding proteins, it binds directly to 16S rRNA where it nucleates assembly of the body of the 30S subunit. With S5 and S12 plays an important role in translational accuracy. The sequence is that of Small ribosomal subunit protein uS4c (rps4) from Gladiolus murielae (Abyssinian gladiolus).